Here is a 450-residue protein sequence, read N- to C-terminus: Phosphoglucosamine mutase (450 aa).

The active-site Phosphoserine intermediate is Ser-101. Positions 101, 240, 242, and 244 each coordinate Mg(2+). Position 101 is a phosphoserine (Ser-101).

This sequence belongs to the phosphohexose mutase family. The cofactor is Mg(2+). Activated by phosphorylation.

The enzyme catalyses alpha-D-glucosamine 1-phosphate = D-glucosamine 6-phosphate. Functionally, catalyzes the conversion of glucosamine-6-phosphate to glucosamine-1-phosphate. The polypeptide is Phosphoglucosamine mutase (Streptococcus pneumoniae serotype 4 (strain ATCC BAA-334 / TIGR4)).